The primary structure comprises 756 residues: 3-O-alpha-D-glucosyl-L-rhamnose phosphorylase (756 aa).

Residue 358–359 (WD) coordinates substrate. The Proton donor role is filled by Glu-486. 590 to 591 (KQ) is a substrate binding site.

The protein belongs to the glycosyl hydrolase 65 family. Monomer.

The protein resides in the cytoplasm. The catalysed reaction is 3-O-alpha-D-glucosyl-L-rhamnose + phosphate = beta-D-glucose 1-phosphate + L-rhamnopyranose. Phosphorylase showing strict alpha-1,3-regioselectivity and producing 3-O-alpha-D-glucopyranosyl-L-rhamnopyranose. Specific for L-rhamnose as acceptor and beta-D-glucose 1-phosphate as donor. Does not phosphorylate alpha,alpha-trehalose, kojibiose, nigerose, or maltose. The protein is 3-O-alpha-D-glucosyl-L-rhamnose phosphorylase of Lachnoclostridium phytofermentans (strain ATCC 700394 / DSM 18823 / ISDg) (Clostridium phytofermentans).